Here is a 180-residue protein sequence, read N- to C-terminus: High mobility group protein B1 (180 aa).

The short motif at 1–8 is the Nuclear localization signal (NLS) 1 element; the sequence is VNFSEFSK. Residues 1–44 constitute a DNA-binding region (HMG box 1); sequence VNFSEFSKKCSERWKTMSAKEKGKFEDMAKADKARYEREMKTYI. Lysine 8 is modified (N6-acetyllysine). Isoglutamyl lysine isopeptide (Lys-Gln) (interchain with Q-?) cross-links involve residues lysine 8 and lysine 9. Position 10 is a cysteine sulfonic acid (-SO3H) (cysteine 10). Residue lysine 33 forms an Isoglutamyl lysine isopeptide (Lys-Gln) (interchain with Q-?) linkage. Residues 45–61 are LPS binding (Lipid A); sequence PPKGETKKKFKDPNAPK. The interval 54-73 is cytokine-stimulating activity; the sequence is FKDPNAPKRPPSAFFLFCSE. An N6-acetyllysine modification is found at lysine 55. The segment at residues 60–128 is a DNA-binding region (HMG box 2); it reads PKRPPSAFFL…KYEKDIAAYR (69 aa). The residue at position 65 (serine 65) is a Phosphoserine. Cysteine 71 carries the cysteine sulfonic acid (-SO3H) modification. 7 positions are modified to N6-acetyllysine: lysine 92, lysine 93, lysine 106, lysine 137, lysine 138, lysine 142, and lysine 145. The interval 115 to 148 is binding to AGER/RAGE; it reads KLKEKYEKDIAAYRAKGKPDAAKKGVVKAEKSKK. Over residues 126-144 the composition is skewed to basic and acidic residues; it reads AYRAKGKPDAAKKGVVKAE. Positions 126-180 are disordered; it reads AYRAKGKPDAAKKGVVKAEKSKKKKEEEDDEEDEEDEEEEEEEEDEDEEEDDDDE. The short motif at 143–149 is the Nuclear localization signal (NLS) 2 element; the sequence is AEKSKKK. The NLS 2 stretch occupies residues 143–149; it reads AEKSKKK. Residue lysine 145 forms an Isoglutamyl lysine isopeptide (Lys-Gln) (interchain with Q-?) linkage. Serine 146 carries the post-translational modification ADP-ribosylserine. Residues lysine 147, lysine 148, lysine 149, and lysine 150 each carry the N6-acetyllysine modification. Isoglutamyl lysine isopeptide (Lys-Gln) (interchain with Q-?) cross-links involve residues lysine 147, lysine 148, and lysine 149. Residues 152-180 show a composition bias toward acidic residues; it reads EEDDEEDEEDEEEEEEEEDEDEEEDDDDE.

This sequence belongs to the HMGB family. Interacts (fully reduced HMGB1) with CXCL12; probably in a 1:2 ratio involving two molecules of CXCL12, each interacting with one HMG box of HMGB1; inhibited by glycyrrhizin. Associates with the TLR4:LY96 receptor complex. Component of the RAG complex composed of core components RAG1 and RAG2, and associated component HMGB1 or HMGB2. Interacts (in cytoplasm upon starvation) with BECN1; inhibits the interaction of BECN1 and BCL2 leading to promotion of autophagy. Interacts with KPNA1; involved in nuclear import. Interacts with SREBF1, TLR2, TLR4, TLR9, PTPRZ1, APEX1, FEN1, POLB, TERT. Interacts with IL1B, AGER, MSH2, XPA, XPC, HNF1A, TP53. Interacts with CD24; the probable CD24:SIGLEC10 complex is proposed to inhibit HGMB1-mediated tissue damage immune response. Interacts with THBD; prevents HGMB1 interaction with ACER/RAGE and inhibits HGMB1 pro-inflammatory activity. Interacts with HAVCR2; impairs HMGB1 binding to B-DNA and likely HMGB1-mediated innate immune response. Interacts with XPO1; mediating nuclear export. Interacts with receptor RAGE/AGER. In terms of processing, phosphorylated at serine residues. Phosphorylation in both NLS regions is required for cytoplasmic translocation followed by secretion. Acetylated on multiple sites upon stimulation with LPS. Acetylation on lysine residues in the nuclear localization signals (NLS 1 and NLS 2) leads to cytoplasmic localization and subsequent secretion. Post-translationally, reduction/oxidation of cysteine residues and a possible intramolecular disulfide bond give rise to different redox forms with specific functional activities in various cellular compartments: 1- fully reduced HMGB1 (HMGB1C23hC45hC106h), 2-disulfide HMGB1 (HMGB1C23-C45C106h) and 3- sulfonyl HMGB1 (HMGB1C23soC45soC106so). In terms of processing, poly-ADP-ribosylated by PARP1 when secreted following stimulation with LPS. In vitro cleavage by CASP1 is liberating a HMG box 1-containing peptide which may mediate immunogenic activity; the peptide antagonizes apoptosis-induced immune tolerance. Can be proteolytically cleaved by a thrombin:thrombomodulin complex; reduces binding to heparin and pro-inflammatory activities. Post-translationally, forms covalent cross-links mediated by transglutaminase TGM2, between a glutamine and the epsilon-amino group of a lysine residue, forming homopolymers and heteropolymers.

The protein resides in the nucleus. The protein localises to the chromosome. It is found in the cytoplasm. It localises to the secreted. Its subcellular location is the cell membrane. The protein resides in the endosome. The protein localises to the endoplasmic reticulum-Golgi intermediate compartment. Its function is as follows. Multifunctional redox sensitive protein with various roles in different cellular compartments. In the nucleus is one of the major chromatin-associated non-histone proteins and acts as a DNA chaperone involved in replication, transcription, chromatin remodeling, V(D)J recombination, DNA repair and genome stability. Proposed to be an universal biosensor for nucleic acids. Promotes host inflammatory response to sterile and infectious signals and is involved in the coordination and integration of innate and adaptive immune responses. In the cytoplasm functions as a sensor and/or chaperone for immunogenic nucleic acids implicating the activation of TLR9-mediated immune responses, and mediates autophagy. Acts as a danger-associated molecular pattern (DAMP) molecule that amplifies immune responses during tissue injury. Released to the extracellular environment can bind DNA, nucleosomes, IL-1 beta, CXCL12, AGER isoform 2/sRAGE, lipopolysaccharide (LPS) and lipoteichoic acid (LTA), and activates cells through engagement of multiple surface receptors. In the extracellular compartment fully reduced HMGB1 (released by necrosis) acts as a chemokine, disulfide HMGB1 (actively secreted) as a cytokine, and sulfonyl HMGB1 (released from apoptotic cells) promotes immunological tolerance. Has proangiogenic activity. May be involved in platelet activation. Binds to phosphatidylserine and phosphatidylethanolamide. Bound to RAGE mediates signaling for neuronal outgrowth. May play a role in accumulation of expanded polyglutamine (polyQ) proteins. Nuclear functions are attributed to fully reduced HGMB1. Associates with chromatin and binds DNA with a preference to non-canonical DNA structures such as single-stranded DNA, DNA-containing cruciforms or bent structures, supercoiled DNA and ZDNA. Can bent DNA and enhance DNA flexibility by looping thus providing a mechanism to promote activities on various gene promoters by enhancing transcription factor binding and/or bringing distant regulatory sequences into close proximity. May be involved in nucleotide excision repair (NER), mismatch repair (MMR) and base excision repair (BER) pathways, and double strand break repair such as non-homologous end joining (NHEJ). Involved in V(D)J recombination by acting as a cofactor of the RAG complex: acts by stimulating cleavage and RAG protein binding at the 23 bp spacer of conserved recombination signal sequences (RSS). In vitro can displace histone H1 from highly bent DNA. Can restructure the canonical nucleosome leading to relaxation of structural constraints for transcription factor-binding. Enhances binding of sterol regulatory element-binding proteins (SREBPs) such as SREBF1 to their cognate DNA sequences and increases their transcriptional activities. Facilitates binding of TP53 to DNA. May be involved in mitochondrial quality control and autophagy in a transcription-dependent fashion implicating HSPB1. Can modulate the activity of the telomerase complex and may be involved in telomere maintenance. In terms of biological role, in the cytoplasm proposed to dissociate the BECN1:BCL2 complex via competitive interaction with BECN1 leading to autophagy activation. Can protect BECN1 and ATG5 from calpain-mediated cleavage and thus proposed to control their proautophagic and proapoptotic functions and to regulate the extent and severity of inflammation-associated cellular injury. In myeloid cells has a protective role against endotoxemia and bacterial infection by promoting autophagy. Involved in endosomal translocation and activation of TLR9 in response to CpG-DNA in macrophages. Functionally, in the extracellular compartment (following either active secretion or passive release) involved in regulation of the inflammatory response. Fully reduced HGMB1 (which subsequently gets oxidized after release) in association with CXCL12 mediates the recruitment of inflammatory cells during the initial phase of tissue injury; the CXCL12:HMGB1 complex triggers CXCR4 homodimerization. Induces the migration of monocyte-derived immature dendritic cells and seems to regulate adhesive and migratory functions of neutrophils implicating AGER/RAGE and ITGAM. Can bind to various types of DNA and RNA including microbial unmethylated CpG-DNA to enhance the innate immune response to nucleic acids. Proposed to act in promiscuous DNA/RNA sensing which cooperates with subsequent discriminative sensing by specific pattern recognition receptors. Promotes extracellular DNA-induced AIM2 inflammasome activation implicating AGER/RAGE. Disulfide HMGB1 binds to transmembrane receptors, such as AGER/RAGE, TLR2, TLR4 and probably TREM1, thus activating their signal transduction pathways. Mediates the release of cytokines/chemokines such as TNF, IL-1, IL-6, IL-8, CCL2, CCL3, CCL4 and CXCL10. Promotes secretion of interferon-gamma by macrophage-stimulated natural killer (NK) cells in concert with other cytokines like IL-2 or IL-12. TLR4 is proposed to be the primary receptor promoting macrophage activation and signaling through TLR4 seems to implicate LY96/MD-2. In bacterial LPS- or LTA-mediated inflammatory responses binds to the endotoxins and transfers them to CD14 for signaling to the respective TLR4:LY96 and TLR2 complexes. Contributes to tumor proliferation by association with ACER/RAGE. Can bind to IL1-beta and signals through the IL1R1:IL1RAP receptor complex. Binding to class A CpG activates cytokine production in plasmacytoid dendritic cells implicating TLR9, MYD88 and AGER/RAGE and can activate autoreactive B cells. Via HMGB1-containing chromatin immune complexes may also promote B cell responses to endogenous TLR9 ligands through a B-cell receptor (BCR)-dependent and ACER/RAGE-independent mechanism. Inhibits phagocytosis of apoptotic cells by macrophages; the function is dependent on poly-ADP-ribosylation and involves binding to phosphatidylserine on the cell surface of apoptotic cells. In adaptive immunity may be involved in enhancing immunity through activation of effector T-cells and suppression of regulatory T (TReg) cells. In contrast, without implicating effector or regulatory T-cells, required for tumor infiltration and activation of T-cells expressing the lymphotoxin LTA:LTB heterotrimer thus promoting tumor malignant progression. Also reported to limit proliferation of T-cells. Released HMGB1:nucleosome complexes formed during apoptosis can signal through TLR2 to induce cytokine production. Involved in induction of immunological tolerance by apoptotic cells; its pro-inflammatory activities when released by apoptotic cells are neutralized by reactive oxygen species (ROS)-dependent oxidation specifically on Cys-106. During macrophage activation by activated lymphocyte-derived self apoptotic DNA (ALD-DNA) promotes recruitment of ALD-DNA to endosomes. The chain is High mobility group protein B1 (HMGB1) from Cricetulus griseus (Chinese hamster).